The primary structure comprises 1137 residues: Morphogenesis-related protein MSB1 (1137 aa).

Disordered regions lie at residues 1–59 (MNDM…NSMD) and 483–520 (QLKK…LSQT). The segment covering 21–50 (SNSPKKAQKTNLSPNKNQNNEKNVPRSNGR) has biased composition (polar residues). The residue at position 538 (S538) is a Phosphoserine. 3 disordered regions span residues 577–620 (LNNL…EERV), 736–799 (STNT…SDSK), and 814–871 (AVSP…PQFS). Residues 593–608 (FEEKSKDAPIREEYHT) show a composition bias toward basic and acidic residues. Over residues 736–749 (STNTNDSCADSSKY) the composition is skewed to polar residues. The span at 750–769 (TADRKLAEPRKISEESKVND) shows a compositional bias: basic and acidic residues. A compositionally biased stretch (polar residues) spans 770 to 796 (DSSSYYSPNINNLPASRMPSQPTYSNS). 2 positions are modified to phosphoserine: S776 and S816.

In terms of biological role, may play a role in polarity establishment and bud formation. The MSB1 gene may be functionally redundant. In Saccharomyces cerevisiae (strain ATCC 204508 / S288c) (Baker's yeast), this protein is Morphogenesis-related protein MSB1 (MSB1).